Reading from the N-terminus, the 655-residue chain is Tumor necrosis factor receptor superfamily member 21 (655 aa).

The signal sequence occupies residues 1–41; sequence MGTRASSITALASCSRTAGQVGATMVAGSLLLLGFLSTITA. The Extracellular portion of the chain corresponds to 42–349; it reads QPEQKTLSLP…AHKHFDINEH (308 aa). TNFR-Cys repeat units follow at residues 50–88, 90–131, 133–167, and 170–211; these read LPGT…LRVC, SCPA…DREC, CPPG…EDVR, and QCAR…DNVC. Intrachain disulfides connect C67/C80, C70/C88, C91/C106, C109/C123, C113/C131, C133/C144, C150/C168, C171/C186, and C192/C211. An N-linked (GlcNAc...) asparagine glycan is attached at N82. N-linked (GlcNAc...) asparagine glycosylation is present at N141. Disordered regions lie at residues 222 to 305 and 318 to 339; these read PPSS…QAPH and EATG…PRQN. Polar residues-rich tracts occupy residues 241 to 262 and 276 to 302; these read VPSS…TASV and PDNT…THQQ. N252, N257, N278, and N289 each carry an N-linked (GlcNAc...) asparagine glycan. Positions 330–339 are enriched in basic residues; it reads APKRGHPRQN. A helical membrane pass occupies residues 350 to 370; that stretch reads LPWMIVLFLLLVLVLIVVCSI. C368 is lipidated: S-palmitoyl cysteine. Residues 371 to 655 are Cytoplasmic-facing; the sequence is RKSSRTLKKG…SVYSHLPDLL (285 aa). Residues 415 to 498 form the Death domain; sequence GIDILKLVAA…DVVEKIRGLM (84 aa).

Associates with TRADD. Interacts with NGFR. Interacts with CASP8. Post-translationally, oxidized in response to reactive oxygen species (ROS), leading to endocytosis. In terms of tissue distribution, detected in spleen B-cells (at protein level). Ubiquitous. Highly expressed in adult spleen, thymus, testis, prostate, ovary, small intestine, colon, brain, lung and kidney, and in fetal brain, liver and lung. Detected at lower levels in adult peripheral blood leukocytes, lung, and in fetal muscle, heart, kidney, small intestine and skin. Detected in T-cells, B-cells and monocytes. In T-cells expression is highest in Th0 cells, intermediate in Th2 cells and lower in Th1 cells. Expressed at low levels in proliferating progenitors in the spinal cord, but is highly expressed by differentiating neurons within the spinal cord and adjacent dorsal root ganglia.

It localises to the cell membrane. In terms of biological role, promotes apoptosis, possibly via a pathway that involves the activation of NF-kappa-B. Can also promote apoptosis mediated by BAX and by the release of cytochrome c from the mitochondria into the cytoplasm. Trophic-factor deprivation triggers the cleavage of surface APP by beta-secretase to release sAPP-beta which is further cleaved to release an N-terminal fragment of APP (N-APP). Negatively regulates oligodendrocyte survival, maturation and myelination. Plays a role in signaling cascades triggered by stimulation of T-cell receptors, in the adaptive immune response and in the regulation of T-cell differentiation and proliferation. Negatively regulates T-cell responses and the release of cytokines such as IL4, IL5, IL10, IL13 and IFNG by Th2 cells. Negatively regulates the production of IgG, IgM and IgM in response to antigens. May inhibit the activation of JNK in response to T-cell stimulation. Also acts as a regulator of pyroptosis: recruits CASP8 in response to reactive oxygen species (ROS) and subsequent oxidation, leading to activation of GSDMC. This Mus musculus (Mouse) protein is Tumor necrosis factor receptor superfamily member 21 (Tnfrsf21).